The primary structure comprises 171 residues: 3-hydroxydecanoyl-[acyl-carrier-protein] dehydratase (171 aa).

Residue H70 is part of the active site.

The protein belongs to the thioester dehydratase family. FabA subfamily. Homodimer.

Its subcellular location is the cytoplasm. The enzyme catalyses a (3R)-hydroxyacyl-[ACP] = a (2E)-enoyl-[ACP] + H2O. The catalysed reaction is (3R)-hydroxydecanoyl-[ACP] = (2E)-decenoyl-[ACP] + H2O. It catalyses the reaction (2E)-decenoyl-[ACP] = (3Z)-decenoyl-[ACP]. Its pathway is lipid metabolism; fatty acid biosynthesis. In terms of biological role, necessary for the introduction of cis unsaturation into fatty acids. Catalyzes the dehydration of (3R)-3-hydroxydecanoyl-ACP to E-(2)-decenoyl-ACP and then its isomerization to Z-(3)-decenoyl-ACP. Can catalyze the dehydratase reaction for beta-hydroxyacyl-ACPs with saturated chain lengths up to 16:0, being most active on intermediate chain length. The polypeptide is 3-hydroxydecanoyl-[acyl-carrier-protein] dehydratase (Vibrio campbellii (strain ATCC BAA-1116)).